The chain runs to 166 residues: Myosin regulatory light chain 2, ventricular/cardiac muscle isoform (166 aa).

A N,N,N-trimethylserine modification is found at serine 2. Asparagine 14 carries the deamidated asparagine modification. Serine 19 bears the Phosphoserine mark. 3 consecutive EF-hand domains span residues threonine 24–valine 59, aspartate 94–arginine 129, and phenylalanine 130–lysine 165. Ca(2+) is bound by residues aspartate 37, asparagine 39, aspartate 41, and aspartate 48. Threonine 52 carries the phosphothreonine modification.

Myosin is a hexamer of 2 heavy chains and 4 light chains. Interacts with MYOC. In terms of processing, N-terminus is methylated by METTL11A/NTM1. Post-translationally, phosphorylated by MYLK3 and MYLK2; promotes cardiac muscle contraction and function. Dephosphorylated by PPP1CB complexed to PPP1R12B. The phosphorylated form in adult is expressed as gradients across the heart from endocardium (low phosphorylation) to epicardium (high phosphorylation); regulates cardiac torsion and workload distribution.

Its subcellular location is the cytoplasm. The protein localises to the myofibril. It is found in the sarcomere. It localises to the a band. In terms of biological role, contractile protein that plays a role in heart development and function. Following phosphorylation, plays a role in cross-bridge cycling kinetics and cardiac muscle contraction by increasing myosin lever arm stiffness and promoting myosin head diffusion; as a consequence of the increase in maximum contraction force and calcium sensitivity of contraction force. These events altogether slow down myosin kinetics and prolong duty cycle resulting in accumulated myosins being cooperatively recruited to actin binding sites to sustain thin filament activation as a means to fine-tune myofilament calcium sensitivity to force. During cardiogenesis plays an early role in cardiac contractility by promoting cardiac myofibril assembly. This Bos taurus (Bovine) protein is Myosin regulatory light chain 2, ventricular/cardiac muscle isoform.